The primary structure comprises 541 residues: uncharacterized protein (541 aa).

A run of 12 helical transmembrane segments spans residues 99-119 (WIVV…SSVY), 131-153 (GVSI…FGSL), 165-185 (FVVY…GGCA), 187-207 (NIWT…TPLS), 224-244 (YVLP…PIIG), 256-276 (WVFW…FFFM), 325-345 (LLIT…VYII), 367-387 (IGLS…CTPI), 409-429 (LYPL…FAWT), 439-459 (WIVP…VFFV), 472-494 (AASA…SLVG), and 508-528 (SLLG…FIYG).

This sequence belongs to the major facilitator superfamily. CAR1 family.

It localises to the membrane. This is an uncharacterized protein from Schizosaccharomyces pombe (strain 972 / ATCC 24843) (Fission yeast).